Consider the following 179-residue polypeptide: Acireductone dioxygenase (179 aa).

The segment at 1–23 is disordered; it reads MVQAWYMDESTADPRMPHRAQPD. Fe(2+) is bound by residues H88, H90, E94, and H133. 4 residues coordinate Ni(2+): H88, H90, E94, and H133.

Belongs to the acireductone dioxygenase (ARD) family. Monomer. Interacts with MMP14. Fe(2+) serves as cofactor. Ni(2+) is required as a cofactor. As to expression, detected in prostate, liver, heart, brain, muscle, kidney and seminal vesicles.

The protein resides in the cytoplasm. The protein localises to the nucleus. It is found in the cell membrane. It catalyses the reaction 1,2-dihydroxy-5-(methylsulfanyl)pent-1-en-3-one + O2 = 4-methylsulfanyl-2-oxobutanoate + formate + 2 H(+). It carries out the reaction 1,2-dihydroxy-5-(methylsulfanyl)pent-1-en-3-one + O2 = 3-(methylsulfanyl)propanoate + CO + formate + 2 H(+). Its pathway is amino-acid biosynthesis; L-methionine biosynthesis via salvage pathway; L-methionine from S-methyl-5-thio-alpha-D-ribose 1-phosphate: step 5/6. Functionally, catalyzes 2 different reactions between oxygen and the acireductone 1,2-dihydroxy-3-keto-5-methylthiopentene (DHK-MTPene) depending upon the metal bound in the active site. Fe-containing acireductone dioxygenase (Fe-ARD) produces formate and 2-keto-4-methylthiobutyrate (KMTB), the alpha-ketoacid precursor of methionine in the methionine recycle pathway. Ni-containing acireductone dioxygenase (Ni-ARD) produces methylthiopropionate, carbon monoxide and formate, and does not lie on the methionine recycle pathway. Also down-regulates cell migration mediated by MMP14. This is Acireductone dioxygenase (Adi1) from Rattus norvegicus (Rat).